A 466-amino-acid polypeptide reads, in one-letter code: Chromosomal replication initiator protein DnaA (466 aa).

Positions 1–85 (MSLSLWQHCL…FEVGNKPVSA (85 aa)) are domain I, interacts with DnaA modulators. The tract at residues 82-122 (PVSARTTESVPKTVTHPAVNSTPTNSQPVRPSWDNQPQSQL) is disordered. Residues 85-122 (ARTTESVPKTVTHPAVNSTPTNSQPVRPSWDNQPQSQL) show a composition bias toward polar residues. Residues 85 to 129 (ARTTESVPKTVTHPAVNSTPTNSQPVRPSWDNQPQSQLPELNYRS) form a domain II region. A domain III, AAA+ region region spans residues 130-346 (NVNPKHKFDN…GALNRVIANA (217 aa)). Gly174, Gly176, Lys177, and Thr178 together coordinate ATP. A domain IV, binds dsDNA region spans residues 347–466 (NFTGRAITID…FSNLIRTLSS (120 aa)).

The protein belongs to the DnaA family. As to quaternary structure, oligomerizes as a right-handed, spiral filament on DNA at oriC.

It localises to the cytoplasm. Plays an essential role in the initiation and regulation of chromosomal replication. ATP-DnaA binds to the origin of replication (oriC) to initiate formation of the DNA replication initiation complex once per cell cycle. Binds the DnaA box (a 9 base pair repeat at the origin) and separates the double-stranded (ds)DNA. Forms a right-handed helical filament on oriC DNA; dsDNA binds to the exterior of the filament while single-stranded (ss)DNA is stabiized in the filament's interior. The ATP-DnaA-oriC complex binds and stabilizes one strand of the AT-rich DNA unwinding element (DUE), permitting loading of DNA polymerase. After initiation quickly degrades to an ADP-DnaA complex that is not apt for DNA replication. Binds acidic phospholipids. The protein is Chromosomal replication initiator protein DnaA of Proteus mirabilis (strain HI4320).